A 208-amino-acid polypeptide reads, in one-letter code: NADH-quinone oxidoreductase subunit I 2 (208 aa).

4Fe-4S ferredoxin-type domains are found at residues 79 to 109 (ILVE…IEGK) and 119 to 148 (SVFN…QTDI). 8 residues coordinate [4Fe-4S] cluster: Cys88, Cys91, Cys94, Cys98, Cys128, Cys131, Cys134, and Cys138.

Belongs to the complex I 23 kDa subunit family. NDH-1 is composed of 14 different subunits. Subunits NuoA, H, J, K, L, M, N constitute the membrane sector of the complex. [4Fe-4S] cluster serves as cofactor.

It localises to the cell inner membrane. It catalyses the reaction a quinone + NADH + 5 H(+)(in) = a quinol + NAD(+) + 4 H(+)(out). NDH-1 shuttles electrons from NADH, via FMN and iron-sulfur (Fe-S) centers, to quinones in the respiratory chain. The immediate electron acceptor for the enzyme in this species is believed to be ubiquinone. Couples the redox reaction to proton translocation (for every two electrons transferred, four hydrogen ions are translocated across the cytoplasmic membrane), and thus conserves the redox energy in a proton gradient. The protein is NADH-quinone oxidoreductase subunit I 2 of Aquifex aeolicus (strain VF5).